The following is a 373-amino-acid chain: Dual-specificity RNA methyltransferase RlmN (373 aa).

The active-site Proton acceptor is Glu94. Positions 100–339 (EDDRATLCVS…VIVRKTRGDD (240 aa)) constitute a Radical SAM core domain. A disulfide bond links Cys107 and Cys344. Positions 114, 118, and 121 each coordinate [4Fe-4S] cluster. Residues 168–169 (GE), Ser200, 222–224 (SIH), and Asn301 each bind S-adenosyl-L-methionine. The active-site S-methylcysteine intermediate is the Cys344.

Belongs to the radical SAM superfamily. RlmN family. The cofactor is [4Fe-4S] cluster.

The protein localises to the cytoplasm. The catalysed reaction is adenosine(2503) in 23S rRNA + 2 reduced [2Fe-2S]-[ferredoxin] + 2 S-adenosyl-L-methionine = 2-methyladenosine(2503) in 23S rRNA + 5'-deoxyadenosine + L-methionine + 2 oxidized [2Fe-2S]-[ferredoxin] + S-adenosyl-L-homocysteine. It carries out the reaction adenosine(37) in tRNA + 2 reduced [2Fe-2S]-[ferredoxin] + 2 S-adenosyl-L-methionine = 2-methyladenosine(37) in tRNA + 5'-deoxyadenosine + L-methionine + 2 oxidized [2Fe-2S]-[ferredoxin] + S-adenosyl-L-homocysteine. In terms of biological role, specifically methylates position 2 of adenine 2503 in 23S rRNA and position 2 of adenine 37 in tRNAs. m2A2503 modification seems to play a crucial role in the proofreading step occurring at the peptidyl transferase center and thus would serve to optimize ribosomal fidelity. The protein is Dual-specificity RNA methyltransferase RlmN of Shewanella denitrificans (strain OS217 / ATCC BAA-1090 / DSM 15013).